The primary structure comprises 713 residues: Phosphoribosylformylglycinamidine synthase subunit PurL (713 aa).

H34 is a catalytic residue. Residues Y37 and R73 each coordinate ATP. Position 75 (E75) interacts with Mg(2+). Residues 76–79 (SHNH) and R98 each bind substrate. H77 (proton acceptor) is an active-site residue. D99 serves as a coordination point for Mg(2+). Q221 provides a ligand contact to substrate. Mg(2+) is bound at residue D249. Substrate is bound at residue 292-294 (ESQ). ATP contacts are provided by D474 and G511. Substrate is bound at residue S514.

This sequence belongs to the FGAMS family. In terms of assembly, monomer. Part of the FGAM synthase complex composed of 1 PurL, 1 PurQ and 2 PurS subunits.

It localises to the cytoplasm. The catalysed reaction is N(2)-formyl-N(1)-(5-phospho-beta-D-ribosyl)glycinamide + L-glutamine + ATP + H2O = 2-formamido-N(1)-(5-O-phospho-beta-D-ribosyl)acetamidine + L-glutamate + ADP + phosphate + H(+). It functions in the pathway purine metabolism; IMP biosynthesis via de novo pathway; 5-amino-1-(5-phospho-D-ribosyl)imidazole from N(2)-formyl-N(1)-(5-phospho-D-ribosyl)glycinamide: step 1/2. Its function is as follows. Part of the phosphoribosylformylglycinamidine synthase complex involved in the purines biosynthetic pathway. Catalyzes the ATP-dependent conversion of formylglycinamide ribonucleotide (FGAR) and glutamine to yield formylglycinamidine ribonucleotide (FGAM) and glutamate. The FGAM synthase complex is composed of three subunits. PurQ produces an ammonia molecule by converting glutamine to glutamate. PurL transfers the ammonia molecule to FGAR to form FGAM in an ATP-dependent manner. PurS interacts with PurQ and PurL and is thought to assist in the transfer of the ammonia molecule from PurQ to PurL. The chain is Phosphoribosylformylglycinamidine synthase subunit PurL from Ignicoccus hospitalis (strain KIN4/I / DSM 18386 / JCM 14125).